The following is a 365-amino-acid chain: Putative agmatine deiminase (365 aa).

Agmatine contacts are provided by Glu-214 and Asp-220. The active-site Amidino-cysteine intermediate is Cys-357.

This sequence belongs to the agmatine deiminase family. In terms of assembly, tetramer of two homodimers.

The enzyme catalyses agmatine + H2O = N-carbamoylputrescine + NH4(+). This is Putative agmatine deiminase from Enterococcus faecalis (strain ATCC 700802 / V583).